A 987-amino-acid polypeptide reads, in one-letter code: Leucine--tRNA ligase (987 aa).

Positions 69–80 (PYPSGKGLHVGH) match the 'HIGH' region motif. A 'KMSKS' region motif is present at residues 760–764 (KMGKS). An ATP-binding site is contributed by Lys763.

It belongs to the class-I aminoacyl-tRNA synthetase family.

Its subcellular location is the cytoplasm. The enzyme catalyses tRNA(Leu) + L-leucine + ATP = L-leucyl-tRNA(Leu) + AMP + diphosphate. The chain is Leucine--tRNA ligase from Bifidobacterium longum (strain NCC 2705).